The chain runs to 386 residues: Porin PorA (386 aa).

Residues 1–35 (MKRTLGHALIIIGAALIVIAVLLPTFLVPRLRVIP) form the signal peptide. The segment covering 53–63 (DSSQLGKNEPT) has biased composition (polar residues). A disordered region spans residues 53 to 78 (DSSQLGKNEPTPNRKNDPRCKAETDE). The segment covering 64 to 78 (PNRKNDPRCKAETDE) has biased composition (basic and acidic residues).

This sequence belongs to the PorA family.

The protein localises to the secreted. Its subcellular location is the cell wall. Its function is as follows. Forms water-filled channels that favor the permeation of cations. The protein is Porin PorA of Corynebacterium amycolatum.